The primary structure comprises 343 residues: MDSPSLLEVLQVQQVEKLISPSLRFILAYFTHRYPRFLLRAYNSFDGIYLLVKLLLEKSQLKKWNATSVERRFQLKRVIAVRDSSIIAEEFPQESESATSLNGIDVLKKLFLTYCIPYLLEKCESLTTVKENHTAVSILSLQARDKQKGALSVFYSKIKILLVRLKKILHFVFRLIRKSNTYLQWLYYLLYALGKTPYTNLADHILRQRVIYNVENIHSRKLISTREKSSLLTSIADHSMEGFLIIIQLIDWWQSNNYESHLKKGEVAFTELAPPKLPFEINVSTTDICKICGEKIKNPAVLSTGFVFCYPCIQVWLQRHPFKCPVTNLELSRKGESFWRLMI.

The Peroxisomal matrix portion of the chain corresponds to 1–5 (MDSPS). The chain crosses the membrane as a helical span at residues 6–33 (LLEVLQVQQVEKLISPSLRFILAYFTHR). Over 34-37 (YPRF) the chain is Cytoplasmic. The helical transmembrane segment at 38-62 (LLRAYNSFDGIYLLVKLLLEKSQLK) threads the bilayer. Over 63-102 (KWNATSVERRFQLKRVIAVRDSSIIAEEFPQESESATSLN) the chain is Peroxisomal matrix. The helical transmembrane segment at 103–140 (GIDVLKKLFLTYCIPYLLEKCESLTTVKENHTAVSILS) threads the bilayer. At 141–146 (LQARDK) the chain is on the cytoplasmic side. A helical transmembrane segment spans residues 147–193 (QKGALSVFYSKIKILLVRLKKILHFVFRLIRKSNTYLQWLYYLLYAL). Topologically, residues 194 to 238 (GKTPYTNLADHILRQRVIYNVENIHSRKLISTREKSSLLTSIADH) are peroxisomal matrix. The chain crosses the membrane as a helical span at residues 239–266 (SMEGFLIIIQLIDWWQSNNYESHLKKGE). The Cytoplasmic segment spans residues 267 to 343 (VAFTELAPPK…KGESFWRLMI (77 aa)). Residues cysteine 289, cysteine 292, cysteine 309, and cysteine 312 each coordinate Zn(2+). The segment at 289 to 328 (CKICGEKIKNPAVLSTGFVFCYPCIQVWLQRHPFKCPVTN) adopts an RING-type; degenerate zinc-finger fold.

It belongs to the pex2/pex10/pex12 family. In terms of assembly, component of the PEX2-PEX10-PEX12 retrotranslocation channel, composed of PEX2, PEX10 and PEX12.

The protein localises to the peroxisome membrane. It functions in the pathway protein modification; protein ubiquitination. Functionally, component of a retrotranslocation channel required for peroxisome organization by mediating export of the PEX5 receptor from peroxisomes to the cytosol, thereby promoting PEX5 recycling. The retrotranslocation channel is composed of PEX2, PEX10 and PEX12; each subunit contributing transmembrane segments that coassemble into an open channel that specifically allows the passage of PEX5 through the peroxisomal membrane. PEX12 also regulates PEX5 recycling by activating the E3 ubiquitin-protein ligase activity of PEX10. When PEX5 recycling is compromised, PEX12 stimulates PEX10-mediated polyubiquitination of PEX5, leading to its subsequent degradation. The sequence is that of Peroxisome assembly protein 12 (pex12) from Schizosaccharomyces pombe (strain 972 / ATCC 24843) (Fission yeast).